A 284-amino-acid polypeptide reads, in one-letter code: Agamous-like MADS-box protein AGL49 (284 aa).

Positions 1 to 20 are disordered; that stretch reads MAPRQKKPNKSDDDDGDLHR. The MADS-box domain maps to 21–66; the sequence is KKQSFFKQRFPGFKKKASELSVLCGNSVGFICYGPDNDLHVWPQSQ.

Interacts with MEE14/CBP1.

It is found in the nucleus. In terms of biological role, probable transcription factor that may function in the maintenance of the proper function of the central cell in pollen tube attraction. In Arabidopsis thaliana (Mouse-ear cress), this protein is Agamous-like MADS-box protein AGL49.